Consider the following 399-residue polypeptide: uncharacterized protein (399 aa).

9 consecutive transmembrane segments (helical) span residues 46–66 (IAPY…FFIV), 76–95 (TLPR…YQTM), 139–159 (GVGY…FWMA), 181–201 (IIII…FWTF), 226–246 (LMLN…TCFF), 262–282 (ILPA…SFIW), 303–323 (VQFS…LAHM), 330–350 (IIQA…INYF), and 352–372 (GTII…SFVH).

This sequence belongs to the CDP-alcohol phosphatidyltransferase class-I family.

Its subcellular location is the membrane. This is an uncharacterized protein from Dictyostelium discoideum (Social amoeba).